The primary structure comprises 343 residues: Geranylgeranyl pyrophosphate synthase 1 (343 aa).

The isopentenyl diphosphate site is built by K43, R46, and H75. Mg(2+)-binding residues include D82 and D86. Residue R91 coordinates dimethylallyl diphosphate. Residue R92 participates in isopentenyl diphosphate binding. Dimethylallyl diphosphate-binding residues include K169, T170, and Q212. D215 is a Mg(2+) binding site. Residues N219, K229, and K239 each coordinate dimethylallyl diphosphate.

Belongs to the FPP/GGPP synthase family. Mg(2+) is required as a cofactor.

The catalysed reaction is isopentenyl diphosphate + dimethylallyl diphosphate = (2E)-geranyl diphosphate + diphosphate. It catalyses the reaction isopentenyl diphosphate + (2E)-geranyl diphosphate = (2E,6E)-farnesyl diphosphate + diphosphate. It carries out the reaction isopentenyl diphosphate + (2E,6E)-farnesyl diphosphate = (2E,6E,10E)-geranylgeranyl diphosphate + diphosphate. Geranylgeranyl pyrophosphate synthase; part of the gene cluster 4 that mediates the biosynthesis of an isoprenoid secondary metabolite. The polypeptide is Geranylgeranyl pyrophosphate synthase 1 (GGS1) (Zymoseptoria tritici (strain CBS 115943 / IPO323) (Speckled leaf blotch fungus)).